Consider the following 507-residue polypeptide: Maturase K (507 aa).

The protein belongs to the intron maturase 2 family. MatK subfamily.

It is found in the plastid. The protein resides in the chloroplast. Its function is as follows. Usually encoded in the trnK tRNA gene intron. Probably assists in splicing its own and other chloroplast group II introns. The polypeptide is Maturase K (Ranunculus acris (Meadow buttercup)).